Here is a 130-residue protein sequence, read N- to C-terminus: Histone H2A type 1-D (130 aa).

The interval 1–22 (MSGRGKQGGKARAKAKTRSSRA) is disordered. N-acetylserine is present on Ser2. Phosphoserine; by RPS6KA5 is present on Ser2. Citrulline; alternate is present on Arg4. Arg4 is subject to Symmetric dimethylarginine; by PRMT5; alternate. N6-(2-hydroxyisobutyryl)lysine; alternate is present on residues Lys6 and Lys10. N6-acetyllysine; alternate is present on Lys6. Over residues 7-19 (QGGKARAKAKTRS) the composition is skewed to basic residues. 2 positions are modified to N6-(beta-hydroxybutyryl)lysine; alternate: Lys10 and Lys14. At Lys10 the chain carries N6-lactoyllysine; alternate. Lys10 is modified (N6-succinyllysine; alternate). Lys14 is covalently cross-linked (Glycyl lysine isopeptide (Lys-Gly) (interchain with G-Cter in ubiquitin); alternate). Residue Lys16 forms a Glycyl lysine isopeptide (Lys-Gly) (interchain with G-Cter in ubiquitin) linkage. Lys37 bears the N6-(2-hydroxyisobutyryl)lysine; alternate mark. An N6-(beta-hydroxybutyryl)lysine; alternate modification is found at Lys37. The residue at position 37 (Lys37) is an N6-crotonyllysine; alternate. An N6-(2-hydroxyisobutyryl)lysine mark is found at Lys75 and Lys76. Lys96 is subject to N6-(2-hydroxyisobutyryl)lysine; alternate. The residue at position 96 (Lys96) is an N6-(beta-hydroxybutyryl)lysine; alternate. Lys96 bears the N6-succinyllysine; alternate mark. Residue Lys96 is modified to N6-glutaryllysine; alternate. N6-glutaryllysine is present on Lys100. The residue at position 105 (Gln105) is an N5-methylglutamine. The residue at position 119 (Lys119) is an N6-(2-hydroxyisobutyryl)lysine; alternate. N6-(beta-hydroxybutyryl)lysine; alternate is present on Lys119. Lys119 and Lys120 each carry N6-crotonyllysine; alternate. Lys119 and Lys120 each carry N6-glutaryllysine; alternate. Residue Lys120 forms a Glycyl lysine isopeptide (Lys-Gly) (interchain with G-Cter in ubiquitin); alternate linkage. Residue Thr121 is modified to Phosphothreonine; by DCAF1. Lys126 is subject to N6-crotonyllysine; alternate. At Lys126 the chain carries N6-glutaryllysine; alternate.

The protein belongs to the histone H2A family. As to quaternary structure, the nucleosome is a histone octamer containing two molecules each of H2A, H2B, H3 and H4 assembled in one H3-H4 heterotetramer and two H2A-H2B heterodimers. The octamer wraps approximately 147 bp of DNA. In terms of processing, deiminated on Arg-4 in granulocytes upon calcium entry. Monoubiquitination of Lys-120 (H2AK119Ub) by RING1, TRIM37 and RNF2/RING2 complex gives a specific tag for epigenetic transcriptional repression and participates in X chromosome inactivation of female mammals. It is involved in the initiation of both imprinted and random X inactivation. Ubiquitinated H2A is enriched in inactive X chromosome chromatin. Ubiquitination of H2A functions downstream of methylation of 'Lys-27' of histone H3 (H3K27me). H2AK119Ub by RNF2/RING2 can also be induced by ultraviolet and may be involved in DNA repair. Monoubiquitination of Lys-120 (H2AK119Ub) by TRIM37 may promote transformation of cells in a number of breast cancers. Following DNA double-strand breaks (DSBs), it is ubiquitinated through 'Lys-63' linkage of ubiquitin moieties by the E2 ligase UBE2N and the E3 ligases RNF8 and RNF168, leading to the recruitment of repair proteins to sites of DNA damage. Ubiquitination at Lys-14 and Lys-16 (H2AK13Ub and H2AK15Ub, respectively) in response to DNA damage is initiated by RNF168 that mediates monoubiquitination at these 2 sites, and 'Lys-63'-linked ubiquitin are then conjugated to monoubiquitin; RNF8 is able to extend 'Lys-63'-linked ubiquitin chains in vitro. Deubiquitinated by USP51 at Lys-14 and Lys-16 (H2AK13Ub and H2AK15Ub, respectively) after damaged DNA is repaired. H2AK119Ub and ionizing radiation-induced 'Lys-63'-linked ubiquitination (H2AK13Ub and H2AK15Ub) are distinct events. Post-translationally, phosphorylation on Ser-2 (H2AS1ph) is enhanced during mitosis. Phosphorylation on Ser-2 by RPS6KA5/MSK1 directly represses transcription. Acetylation of H3 inhibits Ser-2 phosphorylation by RPS6KA5/MSK1. Phosphorylation at Thr-121 (H2AT120ph) by DCAF1 is present in the regulatory region of many tumor suppresor genes and down-regulates their transcription. In terms of processing, glutamine methylation at Gln-105 (H2AQ104me) by FBL is specifically dedicated to polymerase I. It is present at 35S ribosomal DNA locus and impairs binding of the FACT complex. Symmetric dimethylation on Arg-4 by the PRDM1/PRMT5 complex may play a crucial role in the germ-cell lineage. Post-translationally, crotonylation (Kcr) is specifically present in male germ cells and marks testis-specific genes in post-meiotic cells, including X-linked genes that escape sex chromosome inactivation in haploid cells. Crotonylation marks active promoters and enhancers and confers resistance to transcriptional repressors. It is also associated with post-meiotically activated genes on autosomes. In terms of processing, lactylated in macrophages by EP300/P300 by using lactoyl-CoA directly derived from endogenous or exogenous lactate, leading to stimulates gene transcription.

The protein resides in the nucleus. It localises to the chromosome. Core component of nucleosome. Nucleosomes wrap and compact DNA into chromatin, limiting DNA accessibility to the cellular machineries which require DNA as a template. Histones thereby play a central role in transcription regulation, DNA repair, DNA replication and chromosomal stability. DNA accessibility is regulated via a complex set of post-translational modifications of histones, also called histone code, and nucleosome remodeling. This chain is Histone H2A type 1-D, found in Homo sapiens (Human).